The primary structure comprises 428 residues: Glutamate-1-semialdehyde 2,1-aminomutase (428 aa).

N6-(pyridoxal phosphate)lysine is present on K265.

It belongs to the class-III pyridoxal-phosphate-dependent aminotransferase family. HemL subfamily. As to quaternary structure, homodimer. Pyridoxal 5'-phosphate serves as cofactor.

It localises to the cytoplasm. It carries out the reaction (S)-4-amino-5-oxopentanoate = 5-aminolevulinate. It functions in the pathway porphyrin-containing compound metabolism; protoporphyrin-IX biosynthesis; 5-aminolevulinate from L-glutamyl-tRNA(Glu): step 2/2. This Shewanella sediminis (strain HAW-EB3) protein is Glutamate-1-semialdehyde 2,1-aminomutase.